Consider the following 122-residue polypeptide: Large ribosomal subunit protein uL14c (122 aa).

Belongs to the universal ribosomal protein uL14 family. As to quaternary structure, part of the 50S ribosomal subunit.

The protein localises to the plastid. It localises to the chloroplast. Functionally, binds to 23S rRNA. The chain is Large ribosomal subunit protein uL14c from Staurastrum punctulatum (Green alga).